The primary structure comprises 508 residues: Sugar transport protein 12 (508 aa).

Residues 1-22 (MPSVGIVIGDGKKEYPGKLTLY) are Cytoplasmic-facing. A run of 12 helical transmembrane segments spans residues 23–43 (VTVT…DIGI), 80–100 (VSLT…SLVA), 118–138 (VLFC…MLIV), 141–161 (LLLG…LSEM), 172–192 (IGFQ…NFFF), 201–221 (LSLG…LILP), 294–314 (LTGI…IGFG), 317–337 (AALI…VVSI), 347–367 (FLFL…AAAI), 383–403 (WYAI…AWSW), 426–446 (ITVS…LMML), and 451–471 (FGLF…VYLF). The Cytoplasmic portion of the chain corresponds to 472 to 508 (LPETRGVPIEEMNRVWRSHWYWSKFVDAEKNLTKVVI).

This sequence belongs to the major facilitator superfamily. Sugar transporter (TC 2.A.1.1) family.

It localises to the membrane. Mediates an active uptake of hexoses, probably by sugar/hydrogen symport. This is Sugar transport protein 12 (STP12) from Arabidopsis thaliana (Mouse-ear cress).